The primary structure comprises 81 residues: Acyl carrier protein (81 aa).

A Carrier domain is found at 5-80 (EEIFSKVKSI…DIVSYIEKKL (76 aa)). Ser40 carries the post-translational modification O-(pantetheine 4'-phosphoryl)serine.

Belongs to the acyl carrier protein (ACP) family. In terms of processing, 4'-phosphopantetheine is transferred from CoA to a specific serine of apo-ACP by AcpS. This modification is essential for activity because fatty acids are bound in thioester linkage to the sulfhydryl of the prosthetic group.

The protein resides in the cytoplasm. It functions in the pathway lipid metabolism; fatty acid biosynthesis. In terms of biological role, carrier of the growing fatty acid chain in fatty acid biosynthesis. The protein is Acyl carrier protein of Thermotoga maritima (strain ATCC 43589 / DSM 3109 / JCM 10099 / NBRC 100826 / MSB8).